The sequence spans 398 residues: Alpha-2,8-sialyltransferase 8F (398 aa).

Over 1–3 (MRS) the chain is Cytoplasmic. The helical; Signal-anchor for type II membrane protein transmembrane segment at 4–24 (GGTLFALIGSLMLLLLLRMLW) threads the bilayer. Topologically, residues 25 to 398 (CPADAPARSR…KLQFSKCETA (374 aa)) are lumenal. Asparagine 66, asparagine 93, asparagine 151, and asparagine 196 each carry an N-linked (GlcNAc...) asparagine glycan. Cystine bridges form between cysteine 186–cysteine 335 and cysteine 200–cysteine 395. Substrate is bound by residues asparagine 214, 236–238 (NPS), and 322–324 (STG). The Proton donor/acceptor role is filled by histidine 370.

Belongs to the glycosyltransferase 29 family. Highly expressed in kidney and expressed and all tissues tested.

Its subcellular location is the golgi apparatus membrane. It catalyses the reaction a ganglioside GM3 + CMP-N-acetyl-beta-neuraminate = a ganglioside GD3 + CMP + H(+). The enzyme catalyses a ganglioside GM3 (d18:1(4E)) + CMP-N-acetyl-beta-neuraminate = a ganglioside GD3 (d18:1(4E)) + CMP + H(+). The catalysed reaction is a ganglioside GD1a (d18:1(4E)) + CMP-N-acetyl-beta-neuraminate = a ganglioside GT1a (d18:1(4E)) + CMP + H(+). It carries out the reaction a ganglioside GD1a + CMP-N-acetyl-beta-neuraminate = a ganglioside GT1a + CMP + H(+). It catalyses the reaction a ganglioside GM1b (d18:1(4E)) + CMP-N-acetyl-beta-neuraminate = a ganglioside GD1c (d18:1(4E)) + CMP + H(+). The enzyme catalyses a ganglioside GM1b + CMP-N-acetyl-beta-neuraminate = a ganglioside GD1c + CMP + H(+). The catalysed reaction is a ganglioside GM4 (d18:1(4E)) + CMP-N-acetyl-beta-neuraminate = an N-acetyl-alpha-neuraminosyl-(2-&gt;8)-N-acetyl-alpha-neuraminosyl-(2-&gt;3)-beta-D-galactosyl-(1&lt;-&gt;1')-N-acylsphing-4-enine + CMP + H(+). It carries out the reaction N-acetyl-alpha-neuraminosyl-(2-&gt;3)-beta-D-galactosyl-(1&lt;-&gt;1')-ceramide + CMP-N-acetyl-beta-neuraminate = N-acetyl-alpha-neuraminosyl-(2-&gt;8)-N-acetyl-alpha-neuraminosyl-(2-&gt;3)-beta-D-galactosyl-(1&lt;-&gt;1')-ceramide + CMP + H(+). It catalyses the reaction a ganglioside GT1b (d18:1(4E)) + CMP-N-acetyl-beta-neuraminate = a ganglioside GQ1b (d18:1(4E)) + CMP + H(+). The enzyme catalyses a ganglioside GT1b + CMP-N-acetyl-beta-neuraminate = a ganglioside GQ1b + CMP + H(+). It participates in protein modification; protein glycosylation. Its function is as follows. Alpha-2,8-sialyltransferase that prefers O-glycans to N-glycans or glycolipids as acceptor substrates. The minimal acceptor substrate is the NeuAc-alpha-2,3(6)-Gal sequence at the non-reducing end of their carbohydrate groups. The sequence is that of Alpha-2,8-sialyltransferase 8F from Mus musculus (Mouse).